The following is a 906-amino-acid chain: Probable dipeptidyl-aminopeptidase B (906 aa).

Acidic residues predominate over residues 1–11 (MRSSEDREDSE). A disordered region spans residues 1 to 33 (MRSSEDREDSELLPANRPRSPSRSSYDSDDSGL). The Cytoplasmic segment spans residues 1 to 85 (MRSSEDREDS…TKASSSRSRR (85 aa)). Residues 21-33 (PSRSSYDSDDSGL) show a composition bias toward low complexity. The chain crosses the membrane as a helical; Signal-anchor for type II membrane protein span at residues 86–106 (LLWLVVLLCCGGWVVAFVLFI). The Vacuolar portion of the chain corresponds to 107 to 906 (TQGRADYRTA…AKRVWPGFAH (800 aa)). N-linked (GlcNAc...) asparagine glycans are attached at residues Asn-338 and Asn-629. Ser-743 serves as the catalytic Charge relay system. An N-linked (GlcNAc...) asparagine glycan is attached at Asn-797. Active-site charge relay system residues include Asp-820 and His-853.

Belongs to the peptidase S9B family.

It is found in the vacuole membrane. The enzyme catalyses Release of an N-terminal dipeptide, Xaa-Yaa-|-Zaa-, from a polypeptide, preferentially when Yaa is Pro, provided Zaa is neither Pro nor hydroxyproline.. Its function is as follows. Type IV dipeptidyl-peptidase which removes N-terminal dipeptides sequentially from polypeptides having unsubstituted N-termini provided that the penultimate residue is proline. The sequence is that of Probable dipeptidyl-aminopeptidase B (dapB) from Emericella nidulans (strain FGSC A4 / ATCC 38163 / CBS 112.46 / NRRL 194 / M139) (Aspergillus nidulans).